Reading from the N-terminus, the 54-residue chain is Light-harvesting protein B-880 beta chain (54 aa).

At 1–20 the chain is on the cytoplasmic side; the sequence is AEDRSSLSGVSDAEAKEFHA. His-19 and His-37 together coordinate a bacteriochlorophyll. The helical transmembrane segment at 21 to 43 threads the bilayer; that stretch reads LFVSSFMGFMVVAVLAHVLAWAW. The Periplasmic portion of the chain corresponds to 44–54; it reads RPWIPGPKGWA.

The protein belongs to the antenna complex beta subunit family. As to quaternary structure, the core complex is formed by different alpha and beta chains, binding bacteriochlorophyll molecules, and arranged most probably in tetrameric structures disposed around the reaction center. The non-pigmented gamma chains may constitute additional components.

The protein resides in the cell inner membrane. Antenna complexes are light-harvesting systems, which transfer the excitation energy to the reaction centers. This Rhodoblastus acidophilus (Rhodopseudomonas acidophila) protein is Light-harvesting protein B-880 beta chain.